We begin with the raw amino-acid sequence, 407 residues long: Heparan-sulfate 6-O-sulfotransferase 1-B (407 aa).

At 8–14 (MVERTSK) the chain is on the cytoplasmic side. Residues 15–35 (FLLIVVGSVFFMLILYQYVAP) form a helical; Signal-anchor for type II membrane protein membrane-spanning segment. Residues 36–407 (GVINFGSPHG…DYMNHIINGW (372 aa)) are Lumenal-facing. 92–100 (HIQKTGGTT) contributes to the 3'-phosphoadenylyl sulfate binding site. Substrate is bound by residues 122–123 (KK), R139, W144, and H149. H149 (proton acceptor) is an active-site residue. 3'-phosphoadenylyl sulfate is bound by residues R183 and S191. H195 and W202 together coordinate substrate. The N-linked (GlcNAc...) asparagine glycan is linked to N262. 315-317 (MQY) lines the 3'-phosphoadenylyl sulfate pocket. The N-linked (GlcNAc...) asparagine glycan is linked to N318. 321–322 (RA) contributes to the 3'-phosphoadenylyl sulfate binding site. A glycan (N-linked (GlcNAc...) asparagine) is linked at N329.

It belongs to the sulfotransferase 6 family. In terms of tissue distribution, during early somitogenesis, first expressed in floor plate and somites. During mid-somitogenesis, expressed strongly in somites and more weakly in eye and hindbrain. During late somitogenesis, expressed in eye, hindbrain and posterior somites. At 24 hours post-fertilization (hpf), expressed in lens, forebrain, hindbrain, otic vesicle, anterior spinal cord neurons and posterior somites. At 36 hpf, expressed in the retinal ciliary marginal zone, brain, pancreas and weakly in pectoral fin. At 48 hpf, expressed in the retinal ciliary marginal zone, retinal ganglion cells, rhombomeres, otic vesicle and weakly in pectoral fin.

The protein localises to the membrane. The catalysed reaction is alpha-D-glucosaminyl-[heparan sulfate](n) + 3'-phosphoadenylyl sulfate = 6-sulfo-alpha-D-glucosaminyl-[heparan sulfate](n) + adenosine 3',5'-bisphosphate + H(+). 6-O-sulfation enzyme which catalyzes the transfer of sulfate from 3'-phosphoadenosine 5'-phosphosulfate (PAPS) to position 6 of the N-sulfoglucosamine residue (GlcNS) of heparan sulfate. The protein is Heparan-sulfate 6-O-sulfotransferase 1-B of Danio rerio (Zebrafish).